The chain runs to 119 residues: Small ribosomal subunit protein bS16 (119 aa).

A disordered region spans residues 81 to 119; that stretch reads GLAKRPARNNPKKAEPGQKAKERAAARAEKAGAGDDAAA. A compositionally biased stretch (basic and acidic residues) spans 92–113; sequence KKAEPGQKAKERAAARAEKAGA.

Belongs to the bacterial ribosomal protein bS16 family.

In Methylobacterium sp. (strain 4-46), this protein is Small ribosomal subunit protein bS16.